The sequence spans 198 residues: Na(+)-translocating NADH-quinone reductase subunit E (198 aa).

Transmembrane regions (helical) follow at residues 11–31, 35–55, 77–97, 110–130, 140–160, and 176–196; these read SVFIENMALSFFLGMCTFLAV, VSTAFGLGIAVIVVLGIAVPV, FLNFITFIGVIAALVQILEMI, GIFLPLITVNCAIFGGVSFMV, VVYGIGAGTGWMLAIVALAGL, and LGITFITVGLMALGFMSFSGI.

The protein belongs to the NqrDE/RnfAE family. Composed of six subunits; NqrA, NqrB, NqrC, NqrD, NqrE and NqrF.

It localises to the cell inner membrane. It catalyses the reaction a ubiquinone + n Na(+)(in) + NADH + H(+) = a ubiquinol + n Na(+)(out) + NAD(+). In terms of biological role, NQR complex catalyzes the reduction of ubiquinone-1 to ubiquinol by two successive reactions, coupled with the transport of Na(+) ions from the cytoplasm to the periplasm. NqrA to NqrE are probably involved in the second step, the conversion of ubisemiquinone to ubiquinol. The polypeptide is Na(+)-translocating NADH-quinone reductase subunit E (Haemophilus ducreyi (strain 35000HP / ATCC 700724)).